The chain runs to 387 residues: Patatin-13 (387 aa).

An N-terminal signal peptide occupies residues 1–23 (MATTKSVLVLIFMILATTSSTFA). The 199-residue stretch at 32-230 (LSVDGGGIKG…TVADPALLSV (199 aa)) folds into the PNPLA domain. The short motif at 36 to 41 (GGGIKG) is the GXGXXG element. Positions 75–79 (GTSTG) match the GXSXG motif. Catalysis depends on S77, which acts as the Nucleophile. 2 N-linked (GlcNAc...) asparagine glycosylation sites follow: N115 and N203. D216 (proton acceptor) is an active-site residue. The short motif at 216-218 (DGA) is the DGA/G element. A coiled-coil region spans residues 361–385 (ETYEEALKRFAKLLSDRKKLRANKA).

The protein belongs to the patatin family. In terms of tissue distribution, tuber.

It is found in the vacuole. Functionally, probable lipolytic acyl hydrolase (LAH), an activity which is thought to be involved in the response of tubers to pathogens. This Solanum tuberosum (Potato) protein is Patatin-13.